A 295-amino-acid polypeptide reads, in one-letter code: Nicotinate-nucleotide pyrophosphorylase [carboxylating] (295 aa).

Residues R107, 142–144 (TRK), R166, K176, E206, D227, and 256–258 (SGG) contribute to the substrate site.

It belongs to the NadC/ModD family. As to quaternary structure, hexamer formed by 3 homodimers.

It localises to the cytoplasm. The protein localises to the nucleus. The enzyme catalyses nicotinate beta-D-ribonucleotide + CO2 + diphosphate = quinolinate + 5-phospho-alpha-D-ribose 1-diphosphate + 2 H(+). It participates in cofactor biosynthesis; NAD(+) biosynthesis; nicotinate D-ribonucleotide from quinolinate: step 1/1. In terms of biological role, involved in the catabolism of quinolinic acid (QA). This Saccharomyces cerevisiae (strain ATCC 204508 / S288c) (Baker's yeast) protein is Nicotinate-nucleotide pyrophosphorylase [carboxylating] (BNA6).